Here is a 272-residue protein sequence, read N- to C-terminus: Insulin-like growth factor-binding protein 1 (272 aa).

Residues 1 to 25 (MPEFLTVVSWPFLILLSFQIGVAAG) form the signal peptide. In terms of domain architecture, IGFBP N-terminal spans 28–109 (QPWHCAPCTA…TRGQGACVPE (82 aa)). Cystine bridges form between C32–C59, C35–C61, C43–C62, C50–C65, C73–C86, and C80–C106. 3 positions are modified to phosphoserine: S139, S157, and S169. Position 170 is a phosphothreonine (T170). Y171 is subject to Phosphotyrosine. The Thyroglobulin type-1 domain maps to 186–264 (KEPCQRELYK…SLETRGDPNC (79 aa)). 3 cysteine pairs are disulfide-bonded: C189-C219, C230-C241, and C243-C264. S255 is subject to Phosphoserine. A Cell attachment site motif is present at residues 259 to 261 (RGD).

As to quaternary structure, binds equally well IGF1 and IGF2. Interacts with integrin ITGA5:ITGB1. Interacts with VHL; this interaction inhibits HIF1A degradation.

The protein localises to the secreted. Its function is as follows. Multifunctional protein that plays a critical role in regulating the availability of IGFs such as IGF1 and IGF2 to their receptors and thereby regulates IGF-mediated cellular processes including cell migration, proliferation, differentiation or apoptosis in a cell-type specific manner. Also plays a positive role in cell migration by interacting with integrin ITGA5:ITGB1 through its RGD motif. Mechanistically, binding to integrins leads to activation of focal adhesion kinase/PTK2 and stimulation of the mitogen-activated protein kinase (MAPK) pathway. Regulates cardiomyocyte apoptosis by suppressing HIF-1alpha/HIF1A ubiquitination and subsequent degradation. This chain is Insulin-like growth factor-binding protein 1 (Igfbp1), found in Mus musculus (Mouse).